We begin with the raw amino-acid sequence, 238 residues long: SPbeta prophage-derived uncharacterized protein YorM (238 aa).

The first 37 residues, 1–37 (MFKKLIDKHKKYVYHRINKMALFATIGLLGVGLVYSA), serve as a signal peptide directing secretion. Residues 111-121 (TKTKKVQKTNT) show a composition bias toward basic residues. Residues 111 to 132 (TKTKKVQKTNTKRNLDKAVSKS) are disordered.

This Bacillus subtilis (strain 168) protein is SPbeta prophage-derived uncharacterized protein YorM (yorM).